The primary structure comprises 1115 residues: Lateral signaling target protein 2 homolog (1115 aa).

Disordered regions lie at residues P308–S488, S545–S586, R600–D742, and V879–K1027. Residues N322–T361 are compositionally biased toward low complexity. A compositionally biased stretch (basic and acidic residues) spans K363–N373. Composition is skewed to low complexity over residues N374–A417 and P425–A444. The span at Y449–S488 shows a compositional bias: acidic residues. 2 stretches are compositionally biased toward low complexity: residues Q558–Q577 and R600–N614. 2 positions are modified to phosphoserine: S603 and S604. Residues Q615–T628 show a composition bias toward polar residues. A compositionally biased stretch (basic residues) spans S632 to Q655. Over residues A658–H676 the composition is skewed to low complexity. Residues S677–R706 are compositionally biased toward basic residues. 3 stretches are compositionally biased toward low complexity: residues T714–Q726, D733–D742, and S881–S901. S908 carries the phosphoserine modification. Composition is skewed to low complexity over residues Q921–S975 and T988–P1020. Residues D1025 to V1085 form an FYVE-type zinc finger. Zn(2+) contacts are provided by C1031, C1034, C1047, C1050, C1055, C1058, C1077, and C1080. Residues S1088 to S1115 are disordered. Over residues S1090 to S1100 the composition is skewed to low complexity.

The protein belongs to the lst-2 family.

Its function is as follows. Negative regulator of epidermal growth factor receptor (EGFR) signaling. The polypeptide is Lateral signaling target protein 2 homolog (Drosophila grimshawi (Hawaiian fruit fly)).